We begin with the raw amino-acid sequence, 318 residues long: Aspartate carbamoyltransferase catalytic subunit (318 aa).

Carbamoyl phosphate-binding residues include arginine 67 and threonine 68. Residue lysine 95 coordinates L-aspartate. Carbamoyl phosphate contacts are provided by arginine 117, histidine 145, and glutamine 148. Residues arginine 178 and arginine 236 each coordinate L-aspartate. Glycine 277 and proline 278 together coordinate carbamoyl phosphate.

This sequence belongs to the aspartate/ornithine carbamoyltransferase superfamily. ATCase family. As to quaternary structure, heterododecamer (2C3:3R2) of six catalytic PyrB chains organized as two trimers (C3), and six regulatory PyrI chains organized as three dimers (R2).

The catalysed reaction is carbamoyl phosphate + L-aspartate = N-carbamoyl-L-aspartate + phosphate + H(+). It participates in pyrimidine metabolism; UMP biosynthesis via de novo pathway; (S)-dihydroorotate from bicarbonate: step 2/3. In terms of biological role, catalyzes the condensation of carbamoyl phosphate and aspartate to form carbamoyl aspartate and inorganic phosphate, the committed step in the de novo pyrimidine nucleotide biosynthesis pathway. This chain is Aspartate carbamoyltransferase catalytic subunit, found in Roseiflexus castenholzii (strain DSM 13941 / HLO8).